The chain runs to 505 residues: Trans-cinnamate 4-monooxygenase (505 aa).

Residues 3–23 (LLLLEKTLLALFIAATIAITI) traverse the membrane as a helical segment. (E)-cinnamate is bound by residues 212-217 (RSRLAQ) and Ala305. Residue Cys446 coordinates heme.

The protein belongs to the cytochrome P450 family. Heme serves as cofactor.

The protein resides in the membrane. The enzyme catalyses (E)-cinnamate + reduced [NADPH--hemoprotein reductase] + O2 = (E)-4-coumarate + oxidized [NADPH--hemoprotein reductase] + H2O + H(+). It participates in phenylpropanoid metabolism; trans-4-coumarate biosynthesis; trans-4-coumarate from trans-cinnamate: step 1/1. Its function is as follows. Catalyzes the first oxidative step of the phenylpropanoid pathway in higher plants by transforming trans-cinnamate into p-coumarate. The compounds formed by this pathway are essential components for lignification, pollination, and defense against ultraviolet light, predators and pathogens. The chain is Trans-cinnamate 4-monooxygenase (CYP73A19) from Cicer arietinum (Chickpea).